The following is a 431-amino-acid chain: Na(+)/H(+) antiporter NhaA 1 (431 aa).

11 consecutive transmembrane segments (helical) span residues 17 to 37 (LSGI…NSNF), 56 to 76 (FIIS…LFFL), 98 to 118 (MFPF…YIAL), 123 to 143 (FIGF…MLIL), 154 to 174 (LFLV…VATV), 182 to 202 (EYFL…YFDV), 209 to 229 (LFLG…ATIA), 301 to 321 (FSAF…LLDF), 329 to 349 (MIVL…IFGF), 373 to 393 (VGFI…LAFI), and 400 to 420 (AIKI…MILI).

The protein belongs to the NhaA Na(+)/H(+) (TC 2.A.33) antiporter family.

Its subcellular location is the cell inner membrane. It catalyses the reaction Na(+)(in) + 2 H(+)(out) = Na(+)(out) + 2 H(+)(in). Its function is as follows. Na(+)/H(+) antiporter that extrudes sodium in exchange for external protons. The sequence is that of Na(+)/H(+) antiporter NhaA 1 from Aliarcobacter butzleri (strain RM4018) (Arcobacter butzleri).